Here is a 331-residue protein sequence, read N- to C-terminus: Cytoskeleton protein RodZ (331 aa).

The Cytoplasmic portion of the chain corresponds to Met-1–Gly-111. One can recognise an HTH cro/C1-type domain in the interval Leu-19–Leu-71. The H-T-H motif DNA-binding region spans Gln-30–Asp-49. Residues Trp-112–Trp-132 form a helical; Signal-anchor for type II membrane protein membrane-spanning segment. The Periplasmic segment spans residues Trp-133–Gln-331. The span at Met-146 to Leu-166 shows a compositional bias: polar residues. The segment at Met-146–Asn-238 is disordered. Low complexity-rich tracts occupy residues Asp-167–Asp-202 and Thr-216–Thr-234.

The protein belongs to the RodZ family.

It is found in the cell inner membrane. Its function is as follows. Cytoskeletal protein that is involved in cell-shape control through regulation of the length of the long axis. In Klebsiella pneumoniae subsp. pneumoniae (strain ATCC 700721 / MGH 78578), this protein is Cytoskeleton protein RodZ.